A 192-amino-acid chain; its full sequence is Transmembrane protein 276 (192 aa).

The N-terminal stretch at 1 to 32 (MAPKPGAEWSTALSHLVLGVVSLHAAVSTAEA) is a signal peptide. 4 helical membrane-spanning segments follow: residues 35–55 (GAAAGFLLQVLAATTTLAPGL), 63–83 (AGAWVATVIGLPLLAFDFHWV), 89–109 (SANLLLGGGMVLAVAGGHLGP), and 114–134 (VAGQAMLLVVAVTILIVAVFT).

It localises to the membrane. The chain is Transmembrane protein 276 from Homo sapiens (Human).